Consider the following 306-residue polypeptide: Voltage-dependent anion channel-forming protein RSc3414 (306 aa).

The next 4 membrane-spanning stretches (helical) occupy residues 28–48 (LFLI…WLPI), 50–70 (VNLS…FLGF), 213–233 (YSVM…FGLV), and 239–259 (FTPV…AIAA).

This sequence belongs to the anion channel-forming bestrophin (TC 1.A.46) family.

Its subcellular location is the cell membrane. The chain is Voltage-dependent anion channel-forming protein RSc3414 from Ralstonia nicotianae (strain ATCC BAA-1114 / GMI1000) (Ralstonia solanacearum).